The sequence spans 611 residues: Adenosylhomocysteinase 3 (611 aa).

Composition is skewed to low complexity over residues 1–14, 40–57, and 68–78; these read MSVQ…AAKV, AMAP…APAA, and GPAAALSPAAG. The disordered stretch occupies residues 1 to 184; it reads MSVQVVSAAA…KQQKNSKGNS (184 aa). Serine 2 is modified (N-acetylserine). Residues 2–109 are LISN domain, inhibits interaction with ITPR1; that stretch reads SVQVVSAAAA…DGGEALVSPD (108 aa). Phosphoserine is present on serine 107. Residues 135–144 show a composition bias toward basic residues; that stretch reads RPTKIGRRSL. A compositionally biased stretch (low complexity) spans 145 to 164; it reads SRSISQSSTDSYSSAASYTD. Serine 149, serine 152, serine 155, and serine 158 each carry phosphoserine. Positions 236, 310, and 335 each coordinate substrate. 336–338 contributes to the NAD(+) binding site; sequence SVT. Positions 365 and 369 each coordinate substrate. Residues asparagine 370, 401-406, glutamate 422, asparagine 457, 478-479, and asparagine 525 contribute to the NAD(+) site; these read GEVGKG and MG.

The protein belongs to the adenosylhomocysteinase family. Homotetramer. Forms heteromultimers with AHCYL1 (via the C-terminal region). Interacts with ITPR1; with lower affinity than AHCYL1 and maybe via ITPR1. Interacts with SLC4A4. Interacts with ZCCHC4. NAD(+) serves as cofactor. Phosphorylated during neuronal differentiation at the LISN domain. As to expression, expressed in parotid and acinar cells (at protein level).

Its subcellular location is the cytoplasm. It is found in the microsome. The catalysed reaction is S-adenosyl-L-homocysteine + H2O = L-homocysteine + adenosine. It participates in amino-acid biosynthesis; L-homocysteine biosynthesis; L-homocysteine from S-adenosyl-L-homocysteine: step 1/1. Functionally, may regulate the electrogenic sodium/bicarbonate cotransporter SLC4A4 activity and Mg(2+)-sensitivity. On the contrary of its homolog AHCYL1, does not regulate ITPR1 sensitivity to inositol 1,4,5-trisphosphate. The polypeptide is Adenosylhomocysteinase 3 (Bos taurus (Bovine)).